The chain runs to 373 residues: Lipoyl synthase, mitochondrial (373 aa).

The N-terminal 26 residues, 1 to 26 (MALRCWDAARSLGSRIFGRYACSVRA), are a transit peptide targeting the mitochondrion. Cys-105, Cys-110, Cys-116, Cys-136, Cys-140, Cys-143, and Ser-351 together coordinate [4Fe-4S] cluster. One can recognise a Radical SAM core domain in the interval 121-340 (EYATATATIM…EEVGNELGFH (220 aa)).

The protein belongs to the radical SAM superfamily. Lipoyl synthase family. It depends on [4Fe-4S] cluster as a cofactor.

Its subcellular location is the mitochondrion. It catalyses the reaction [[Fe-S] cluster scaffold protein carrying a second [4Fe-4S](2+) cluster] + N(6)-octanoyl-L-lysyl-[protein] + 2 oxidized [2Fe-2S]-[ferredoxin] + 2 S-adenosyl-L-methionine + 4 H(+) = [[Fe-S] cluster scaffold protein] + N(6)-[(R)-dihydrolipoyl]-L-lysyl-[protein] + 4 Fe(3+) + 2 hydrogen sulfide + 2 5'-deoxyadenosine + 2 L-methionine + 2 reduced [2Fe-2S]-[ferredoxin]. The protein operates within protein modification; protein lipoylation via endogenous pathway; protein N(6)-(lipoyl)lysine from octanoyl-[acyl-carrier-protein]: step 2/2. Catalyzes the radical-mediated insertion of two sulfur atoms into the C-6 and C-8 positions of the octanoyl moiety bound to the lipoyl domains of lipoate-dependent enzymes, thereby converting the octanoylated domains into lipoylated derivatives. The protein is Lipoyl synthase, mitochondrial (Lias) of Rattus norvegicus (Rat).